Consider the following 569-residue polypeptide: Proline--tRNA ligase (569 aa).

This sequence belongs to the class-II aminoacyl-tRNA synthetase family. ProS type 1 subfamily. As to quaternary structure, homodimer.

It is found in the cytoplasm. It carries out the reaction tRNA(Pro) + L-proline + ATP = L-prolyl-tRNA(Pro) + AMP + diphosphate. Catalyzes the attachment of proline to tRNA(Pro) in a two-step reaction: proline is first activated by ATP to form Pro-AMP and then transferred to the acceptor end of tRNA(Pro). As ProRS can inadvertently accommodate and process non-cognate amino acids such as alanine and cysteine, to avoid such errors it has two additional distinct editing activities against alanine. One activity is designated as 'pretransfer' editing and involves the tRNA(Pro)-independent hydrolysis of activated Ala-AMP. The other activity is designated 'posttransfer' editing and involves deacylation of mischarged Ala-tRNA(Pro). The misacylated Cys-tRNA(Pro) is not edited by ProRS. The sequence is that of Proline--tRNA ligase from Campylobacter jejuni (strain RM1221).